The sequence spans 639 residues: Protein phosphatase EYA4 (639 aa).

Met1 is modified (N-acetylmethionine). 3 disordered regions span residues 1–72, 210–232, and 300–368; these read MEDS…GGEN, QTQS…PQPG, and ADGT…DSDL. A Glycyl lysine isopeptide (Lys-Gly) (interchain with G-Cter in SUMO2) cross-link involves residue Lys14. Residues 18-30 are compositionally biased toward polar residues; the sequence is ESDVSQSQNSRSM. Residue Lys52 forms a Glycyl lysine isopeptide (Lys-Gly) (interchain with G-Cter in SUMO2) linkage. The span at 56-66 shows a compositional bias: low complexity; the sequence is SNLSSTSVTTN. Positions 300–334 are enriched in polar residues; that stretch reads ADGTPSSTSTYQLQESLPGLTNQPGEFDTMQSPST. Position 361 is a phosphoserine (Ser361). Asp375 serves as the catalytic Nucleophile. Residues Asp375, Asp377, and Asp603 each coordinate Mg(2+). The active-site Proton donor is the Asp377.

It belongs to the HAD-like hydrolase superfamily. EYA family. In terms of assembly, interacts with SIX3; translocates EYA4 from the cytoplasm to the nucleus and promotes activation of their target genes. Mg(2+) serves as cofactor. In terms of tissue distribution, highly expressed in heart and skeletal muscle.

Its subcellular location is the cytoplasm. It localises to the nucleus. It catalyses the reaction O-phospho-L-tyrosyl-[protein] + H2O = L-tyrosyl-[protein] + phosphate. Its function is as follows. Tyrosine phosphatase that specifically dephosphorylates 'Tyr-142' of histone H2AX (H2AXY142ph). 'Tyr-142' phosphorylation of histone H2AX plays a central role in DNA repair and acts as a mark that distinguishes between apoptotic and repair responses to genotoxic stress. Promotes efficient DNA repair by dephosphorylating H2AX, promoting the recruitment of DNA repair complexes containing MDC1. Its function as histone phosphatase probably explains its role in transcription regulation during organogenesis. May be involved in development of the eye. The chain is Protein phosphatase EYA4 (EYA4) from Homo sapiens (Human).